The primary structure comprises 67 residues: DNA-directed RNA polymerase subunit omega (67 aa).

The protein belongs to the RNA polymerase subunit omega family. In terms of assembly, the RNAP catalytic core consists of 2 alpha, 1 beta, 1 beta' and 1 omega subunit. When a sigma factor is associated with the core the holoenzyme is formed, which can initiate transcription.

The enzyme catalyses RNA(n) + a ribonucleoside 5'-triphosphate = RNA(n+1) + diphosphate. Its function is as follows. Promotes RNA polymerase assembly. Latches the N- and C-terminal regions of the beta' subunit thereby facilitating its interaction with the beta and alpha subunits. This Treponema pallidum (strain Nichols) protein is DNA-directed RNA polymerase subunit omega (rpoZ).